A 172-amino-acid chain; its full sequence is Adenine phosphoribosyltransferase (172 aa).

The protein belongs to the purine/pyrimidine phosphoribosyltransferase family. Homodimer.

It localises to the cytoplasm. It catalyses the reaction AMP + diphosphate = 5-phospho-alpha-D-ribose 1-diphosphate + adenine. The protein operates within purine metabolism; AMP biosynthesis via salvage pathway; AMP from adenine: step 1/1. Its function is as follows. Catalyzes a salvage reaction resulting in the formation of AMP, that is energically less costly than de novo synthesis. The polypeptide is Adenine phosphoribosyltransferase (Microcystis aeruginosa (strain NIES-843 / IAM M-2473)).